We begin with the raw amino-acid sequence, 429 residues long: D-amino acid dehydrogenase (429 aa).

An FAD-binding site is contributed by 3–17 (VLILGSGVIGTTTAW).

Belongs to the DadA oxidoreductase family. The cofactor is FAD.

It carries out the reaction a D-alpha-amino acid + A + H2O = a 2-oxocarboxylate + AH2 + NH4(+). It functions in the pathway amino-acid degradation; D-alanine degradation; NH(3) and pyruvate from D-alanine: step 1/1. Oxidative deamination of D-amino acids. The chain is D-amino acid dehydrogenase from Xanthomonas campestris pv. campestris (strain 8004).